A 103-amino-acid polypeptide reads, in one-letter code: Large ribosomal subunit protein uL24 (103 aa).

It belongs to the universal ribosomal protein uL24 family. Part of the 50S ribosomal subunit.

One of two assembly initiator proteins, it binds directly to the 5'-end of the 23S rRNA, where it nucleates assembly of the 50S subunit. In terms of biological role, one of the proteins that surrounds the polypeptide exit tunnel on the outside of the subunit. The polypeptide is Large ribosomal subunit protein uL24 (Dehalococcoides mccartyi (strain ATCC BAA-2266 / KCTC 15142 / 195) (Dehalococcoides ethenogenes (strain 195))).